The following is a 315-amino-acid chain: Calumenin (315 aa).

Positions 1-19 are cleaved as a signal peptide; that stretch reads MDLRQFLLCLSLCTAFALS. Tyr47 carries the post-translational modification Phosphotyrosine. At Thr65 the chain carries Phosphothreonine. 6 EF-hand domains span residues 68-103, 104-139, 151-186, 188-223, 229-264, and 265-300; these read ESKE…AQKR, WIHE…YVLD, QMMV…DEYD, MKDI…HDGN, WVKT…SDYD, and HAEA…FVGS. Ser69 is subject to Phosphoserine. Asp81, Asp83, Asp85, Glu92, Asp117, Asn119, Asp121, and Glu128 together coordinate Ca(2+). N-linked (GlcNAc...) asparagine glycosylation is present at Asn131. Asp164 serves as a coordination point for Ca(2+). Lys165 is subject to N6-acetyllysine. Asp166, Asp168, Glu175, Asp201, Asn203, Asp205, Glu212, Asp242, Asn244, Asp246, Arg248, and Glu253 together coordinate Ca(2+). Phosphothreonine is present on Thr254. Phosphoserine is present on residues Ser261 and Ser277. 5 residues coordinate Ca(2+): Asp278, Asn280, Asp282, Lys284, and Glu289. The Prevents secretion from ER motif lies at 312 to 315; the sequence is HDEF.

This sequence belongs to the CREC family. Interacts with GGCX.

The protein resides in the endoplasmic reticulum membrane. Its subcellular location is the golgi apparatus. It localises to the secreted. The protein localises to the melanosome. It is found in the sarcoplasmic reticulum lumen. Functionally, involved in regulation of vitamin K-dependent carboxylation of multiple N-terminal glutamate residues. Seems to inhibit gamma-carboxylase GGCX. Binds 7 calcium ions with a low affinity. The polypeptide is Calumenin (CALU) (Mesocricetus auratus (Golden hamster)).